An 88-amino-acid chain; its full sequence is Small ribosomal subunit protein uS19 (88 aa).

This sequence belongs to the universal ribosomal protein uS19 family.

Protein S19 forms a complex with S13 that binds strongly to the 16S ribosomal RNA. This chain is Small ribosomal subunit protein uS19 (rpsS), found in Chlamydia pneumoniae (Chlamydophila pneumoniae).